The following is a 232-amino-acid chain: 5'-methylthioadenosine/S-adenosylhomocysteine nucleosidase (232 aa).

Residue Glu12 is the Proton acceptor of the active site. Residues Gly78, Ile152, and 173-174 contribute to the substrate site; that span reads ME. Asp197 serves as the catalytic Proton donor.

Belongs to the PNP/UDP phosphorylase family. MtnN subfamily. As to quaternary structure, homodimer.

The enzyme catalyses S-adenosyl-L-homocysteine + H2O = S-(5-deoxy-D-ribos-5-yl)-L-homocysteine + adenine. It carries out the reaction S-methyl-5'-thioadenosine + H2O = 5-(methylsulfanyl)-D-ribose + adenine. The catalysed reaction is 5'-deoxyadenosine + H2O = 5-deoxy-D-ribose + adenine. It participates in amino-acid biosynthesis; L-methionine biosynthesis via salvage pathway; S-methyl-5-thio-alpha-D-ribose 1-phosphate from S-methyl-5'-thioadenosine (hydrolase route): step 1/2. In terms of biological role, catalyzes the irreversible cleavage of the glycosidic bond in both 5'-methylthioadenosine (MTA) and S-adenosylhomocysteine (SAH/AdoHcy) to adenine and the corresponding thioribose, 5'-methylthioribose and S-ribosylhomocysteine, respectively. Also cleaves 5'-deoxyadenosine, a toxic by-product of radical S-adenosylmethionine (SAM) enzymes, into 5-deoxyribose and adenine. Thus, is required for in vivo function of the radical SAM enzymes biotin synthase and lipoic acid synthase, that are inhibited by 5'-deoxyadenosine accumulation. This is 5'-methylthioadenosine/S-adenosylhomocysteine nucleosidase from Salmonella choleraesuis (strain SC-B67).